The following is a 177-amino-acid chain: Nucleoside triphosphate/diphosphate phosphatase (177 aa).

The active-site Proton donor is Arg-23. Mg(2+)-binding residues include Asn-87, Asp-103, Asp-105, Asp-107, Asp-120, and Glu-123.

This sequence belongs to the Ntdp family. Mg(2+) is required as a cofactor.

It carries out the reaction a ribonucleoside 5'-triphosphate + H2O = a ribonucleoside 5'-diphosphate + phosphate + H(+). The enzyme catalyses a ribonucleoside 5'-diphosphate + H2O = a ribonucleoside 5'-phosphate + phosphate + H(+). Its function is as follows. Has nucleoside phosphatase activity towards nucleoside triphosphates and nucleoside diphosphates. The protein is Nucleoside triphosphate/diphosphate phosphatase of Streptococcus equi subsp. zooepidemicus (strain MGCS10565).